The chain runs to 112 residues: Large ribosomal subunit protein eL30 (112 aa).

This sequence belongs to the eukaryotic ribosomal protein eL30 family.

The sequence is that of Large ribosomal subunit protein eL30 (rpl30) from Dictyostelium discoideum (Social amoeba).